The primary structure comprises 345 residues: Phosphoribosylformylglycinamidine cyclo-ligase (345 aa).

Belongs to the AIR synthase family.

It is found in the cytoplasm. It carries out the reaction 2-formamido-N(1)-(5-O-phospho-beta-D-ribosyl)acetamidine + ATP = 5-amino-1-(5-phospho-beta-D-ribosyl)imidazole + ADP + phosphate + H(+). It participates in purine metabolism; IMP biosynthesis via de novo pathway; 5-amino-1-(5-phospho-D-ribosyl)imidazole from N(2)-formyl-N(1)-(5-phospho-D-ribosyl)glycinamide: step 2/2. This Escherichia coli O45:K1 (strain S88 / ExPEC) protein is Phosphoribosylformylglycinamidine cyclo-ligase.